Reading from the N-terminus, the 332-residue chain is Probable cation efflux system protein MT2084 (332 aa).

The next 5 membrane-spanning stretches (helical) occupy residues 46-66 (ISLL…VMSG), 75-95 (IHNF…ALGA), 113-133 (AGSF…YEAI), 145-165 (VGWV…VALY), and 202-222 (VALG…AAIL).

This sequence belongs to the cation diffusion facilitator (CDF) transporter (TC 2.A.4) family.

The protein localises to the cell membrane. The protein is Probable cation efflux system protein MT2084 of Mycobacterium tuberculosis (strain CDC 1551 / Oshkosh).